The following is a 325-amino-acid chain: Tetraacyldisaccharide 4'-kinase (325 aa).

55–62 (TAGGNGKT) provides a ligand contact to ATP.

This sequence belongs to the LpxK family.

The enzyme catalyses a lipid A disaccharide + ATP = a lipid IVA + ADP + H(+). The protein operates within glycolipid biosynthesis; lipid IV(A) biosynthesis; lipid IV(A) from (3R)-3-hydroxytetradecanoyl-[acyl-carrier-protein] and UDP-N-acetyl-alpha-D-glucosamine: step 6/6. Transfers the gamma-phosphate of ATP to the 4'-position of a tetraacyldisaccharide 1-phosphate intermediate (termed DS-1-P) to form tetraacyldisaccharide 1,4'-bis-phosphate (lipid IVA). The polypeptide is Tetraacyldisaccharide 4'-kinase (Salmonella newport (strain SL254)).